Consider the following 291-residue polypeptide: ATP synthase gamma chain (291 aa).

Belongs to the ATPase gamma chain family. In terms of assembly, F-type ATPases have 2 components, CF(1) - the catalytic core - and CF(0) - the membrane proton channel. CF(1) has five subunits: alpha(3), beta(3), gamma(1), delta(1), epsilon(1). CF(0) has three main subunits: a, b and c.

It is found in the cell membrane. Its function is as follows. Produces ATP from ADP in the presence of a proton gradient across the membrane. The gamma chain is believed to be important in regulating ATPase activity and the flow of protons through the CF(0) complex. This is ATP synthase gamma chain from Streptococcus equinus (Streptococcus bovis).